The chain runs to 461 residues: Photosystem II CP43 reaction center protein (461 aa).

A propeptide spanning residues 1-2 is cleaved from the precursor; that stretch reads ME. T3 carries the N-acetylthreonine modification. T3 is subject to Phosphothreonine. The next 5 membrane-spanning stretches (helical) occupy residues 57 to 81, 122 to 143, 166 to 188, 243 to 263, and 279 to 300; these read LFEVAHFVPEKPMYEQGLILLPHLA, LLGPETLEESFPFFGYVWKDRN, KALYFGGVYDTWAPGGGDVRKIT, KPFAWARRALVWSGEAYLSYS, and WFNNTAYPSEFYGPTGPEASQA. Position 355 (E355) interacts with [CaMn4O5] cluster. The helical transmembrane segment at 435 to 459 threads the bilayer; that stretch reads RARAAAAGFEKGIDRDFEPVLSMTP.

This sequence belongs to the PsbB/PsbC family. PsbC subfamily. In terms of assembly, PSII is composed of 1 copy each of membrane proteins PsbA, PsbB, PsbC, PsbD, PsbE, PsbF, PsbH, PsbI, PsbJ, PsbK, PsbL, PsbM, PsbT, PsbX, PsbY, PsbZ, Psb30/Ycf12, at least 3 peripheral proteins of the oxygen-evolving complex and a large number of cofactors. It forms dimeric complexes. Binds multiple chlorophylls and provides some of the ligands for the Ca-4Mn-5O cluster of the oxygen-evolving complex. It may also provide a ligand for a Cl- that is required for oxygen evolution. PSII binds additional chlorophylls, carotenoids and specific lipids. is required as a cofactor.

The protein resides in the plastid. It is found in the chloroplast thylakoid membrane. Functionally, one of the components of the core complex of photosystem II (PSII). It binds chlorophyll and helps catalyze the primary light-induced photochemical processes of PSII. PSII is a light-driven water:plastoquinone oxidoreductase, using light energy to abstract electrons from H(2)O, generating O(2) and a proton gradient subsequently used for ATP formation. This Platanus occidentalis (Sycamore) protein is Photosystem II CP43 reaction center protein.